Here is a 589-residue protein sequence, read N- to C-terminus: Putative adenine deaminase BC_3012 (589 aa).

It belongs to the metallo-dependent hydrolases superfamily. Adenine deaminase family.

It catalyses the reaction adenine + H2O + H(+) = hypoxanthine + NH4(+). The sequence is that of Putative adenine deaminase BC_3012 from Bacillus cereus (strain ATCC 14579 / DSM 31 / CCUG 7414 / JCM 2152 / NBRC 15305 / NCIMB 9373 / NCTC 2599 / NRRL B-3711).